Here is a 206-residue protein sequence, read N- to C-terminus: Urease accessory protein UreG (206 aa).

11 to 18 (GPVGAGKT) serves as a coordination point for GTP.

It belongs to the SIMIBI class G3E GTPase family. UreG subfamily. Homodimer. UreD, UreF and UreG form a complex that acts as a GTP-hydrolysis-dependent molecular chaperone, activating the urease apoprotein by helping to assemble the nickel containing metallocenter of UreC. The UreE protein probably delivers the nickel.

The protein resides in the cytoplasm. In terms of biological role, facilitates the functional incorporation of the urease nickel metallocenter. This process requires GTP hydrolysis, probably effectuated by UreG. This is Urease accessory protein UreG from Ureaplasma parvum serovar 3 (strain ATCC 700970).